We begin with the raw amino-acid sequence, 118 residues long: Evasin P546 (118 aa).

The N-terminal stretch at 1 to 21 is a signal peptide; it reads MKVLLYIAASCLMLLALNVSA. Disulfide bonds link C38-C59, C55-C96, C72-C101, and C91-C110. N-linked (GlcNAc...) asparagine glycosylation is present at N45.

It is found in the secreted. Salivary chemokine-binding protein which binds to host chemokines CCL1, CCL3, CCL5 and CCL22. This chain is Evasin P546, found in Amblyomma cajennense (Cayenne tick).